Reading from the N-terminus, the 158-residue chain is NADH-quinone oxidoreductase subunit B (158 aa).

4 residues coordinate [4Fe-4S] cluster: Cys36, Cys37, Cys101, and Cys131.

It belongs to the complex I 20 kDa subunit family. In terms of assembly, NDH-1 is composed of 14 different subunits. Subunits NuoB, C, D, E, F, and G constitute the peripheral sector of the complex. Requires [4Fe-4S] cluster as cofactor.

Its subcellular location is the cell inner membrane. The catalysed reaction is a quinone + NADH + 5 H(+)(in) = a quinol + NAD(+) + 4 H(+)(out). NDH-1 shuttles electrons from NADH, via FMN and iron-sulfur (Fe-S) centers, to quinones in the respiratory chain. The immediate electron acceptor for the enzyme in this species is believed to be ubiquinone. Couples the redox reaction to proton translocation (for every two electrons transferred, four hydrogen ions are translocated across the cytoplasmic membrane), and thus conserves the redox energy in a proton gradient. This chain is NADH-quinone oxidoreductase subunit B, found in Francisella philomiragia subsp. philomiragia (strain ATCC 25017 / CCUG 19701 / FSC 153 / O#319-036).